A 235-amino-acid polypeptide reads, in one-letter code: 2-C-methyl-D-erythritol 4-phosphate cytidylyltransferase (235 aa).

It belongs to the IspD/TarI cytidylyltransferase family. IspD subfamily.

The catalysed reaction is 2-C-methyl-D-erythritol 4-phosphate + CTP + H(+) = 4-CDP-2-C-methyl-D-erythritol + diphosphate. It functions in the pathway isoprenoid biosynthesis; isopentenyl diphosphate biosynthesis via DXP pathway; isopentenyl diphosphate from 1-deoxy-D-xylulose 5-phosphate: step 2/6. Functionally, catalyzes the formation of 4-diphosphocytidyl-2-C-methyl-D-erythritol from CTP and 2-C-methyl-D-erythritol 4-phosphate (MEP). This chain is 2-C-methyl-D-erythritol 4-phosphate cytidylyltransferase, found in Synechococcus sp. (strain JA-3-3Ab) (Cyanobacteria bacterium Yellowstone A-Prime).